The following is a 235-amino-acid chain: Peptidase E (235 aa).

Active-site charge relay system residues include serine 122, aspartate 137, and histidine 159.

This sequence belongs to the peptidase S51 family.

It is found in the cytoplasm. It carries out the reaction Dipeptidase E catalyzes the hydrolysis of dipeptides Asp-|-Xaa. It does not act on peptides with N-terminal Glu, Asn or Gln, nor does it cleave isoaspartyl peptides.. Functionally, hydrolyzes dipeptides containing N-terminal aspartate residues. May play a role in allowing the cell to use peptide aspartate to spare carbon otherwise required for the synthesis of the aspartate family of amino acids. The protein is Peptidase E of Shewanella amazonensis (strain ATCC BAA-1098 / SB2B).